Here is a 182-residue protein sequence, read N- to C-terminus: Isopentenyl-diphosphate Delta-isomerase (182 aa).

Mn(2+) is bound by residues histidine 25 and histidine 32. Positions 30–164 (LLHLAFSSWL…PWAFSPWMVM (135 aa)) constitute a Nudix hydrolase domain. Residue cysteine 67 is part of the active site. Mn(2+) is bound at residue histidine 69. Glutamate 87 lines the Mg(2+) pocket. Mn(2+) contacts are provided by glutamate 114 and glutamate 116. Glutamate 116 is an active-site residue.

It belongs to the IPP isomerase type 1 family. In terms of assembly, homodimer. Mg(2+) is required as a cofactor. Mn(2+) serves as cofactor.

The protein localises to the cytoplasm. It catalyses the reaction isopentenyl diphosphate = dimethylallyl diphosphate. It functions in the pathway isoprenoid biosynthesis; dimethylallyl diphosphate biosynthesis; dimethylallyl diphosphate from isopentenyl diphosphate: step 1/1. Functionally, catalyzes the 1,3-allylic rearrangement of the homoallylic substrate isopentenyl (IPP) to its highly electrophilic allylic isomer, dimethylallyl diphosphate (DMAPP). The protein is Isopentenyl-diphosphate Delta-isomerase of Shigella flexneri serotype 5b (strain 8401).